Reading from the N-terminus, the 452-residue chain is Ribosomal protein uS12 methylthiotransferase RimO (452 aa).

The region spanning 5 to 116 is the MTTase N-terminal domain; the sequence is PTIAFSHLGC…IVDVLQRTES (112 aa). Residues C14, C50, C79, C154, C158, and C161 each coordinate [4Fe-4S] cluster. A Radical SAM core domain is found at 140 to 369; sequence TTTSAVAYLR…MATQQPIAER (230 aa). A TRAM domain is found at 372–438; the sequence is RAQIGRLVDV…IYDLHGEVAS (67 aa).

It belongs to the methylthiotransferase family. RimO subfamily. [4Fe-4S] cluster is required as a cofactor.

The protein resides in the cytoplasm. It carries out the reaction L-aspartate(89)-[ribosomal protein uS12]-hydrogen + (sulfur carrier)-SH + AH2 + 2 S-adenosyl-L-methionine = 3-methylsulfanyl-L-aspartate(89)-[ribosomal protein uS12]-hydrogen + (sulfur carrier)-H + 5'-deoxyadenosine + L-methionine + A + S-adenosyl-L-homocysteine + 2 H(+). In terms of biological role, catalyzes the methylthiolation of an aspartic acid residue of ribosomal protein uS12. The chain is Ribosomal protein uS12 methylthiotransferase RimO from Synechococcus sp. (strain ATCC 27144 / PCC 6301 / SAUG 1402/1) (Anacystis nidulans).